The following is a 289-amino-acid chain: Rhodopsin (289 aa).

The Extracellular portion of the chain corresponds to 1–7; sequence YLVNPAA. Residues 8-32 form a helical membrane-spanning segment; the sequence is YAAPGAYMFLLILVGFPVNFLTLYV. Over 33–44 the chain is Cytoplasmic; the sequence is TLEHKKLRTPLN. The chain crosses the membrane as a helical span at residues 45 to 67; it reads YILLNLAVADLFMVLGGFTTTMY. Residues 68 to 81 lie on the Extracellular side of the membrane; the sequence is TSMHGYFVLGRLGC. A disulfide bond links Cys-81 and Cys-158. Residues 82–104 traverse the membrane as a helical segment; it reads NLEGFFATLGGEIALWSLVVLAI. The 'Ionic lock' involved in activated form stabilization motif lies at 105–107; the sequence is ERW. Over 105–123 the chain is Cytoplasmic; sequence ERWIVVCKPISNFRFTEDH. The helical transmembrane segment at 124 to 144 threads the bilayer; it reads AIMGLAFSWVMALTCAVPPLV. The Extracellular segment spans residues 145 to 173; that stretch reads GWSRYIPEGMQCSCGVDYYTRAEGFNNES. Asn-171 is a glycosylation site (N-linked (GlcNAc...) asparagine). Residues 174-195 form a helical membrane-spanning segment; that stretch reads FVIYMFIVHFLIPLSNNFFCYG. Residues 196–223 lie on the Cytoplasmic side of the membrane; it reads RLLCAVKEAAAAQQESETTQRAEREVSR. The helical transmembrane segment at 224-245 threads the bilayer; sequence MVVMMVVSFLMCWLPYASVAWY. Topologically, residues 246–257 are extracellular; the sequence is IFCNQGSEFGPI. A helical membrane pass occupies residues 258-279; sequence FMTLPAFFAKSSAIYNPLIYIC. At Lys-267 the chain carries N6-(retinylidene)lysine. The Cytoplasmic portion of the chain corresponds to 280–289; sequence MNKHVRHCMI.

It belongs to the G-protein coupled receptor 1 family. Opsin subfamily. Post-translationally, phosphorylated on some or all of the serine and threonine residues present in the C-terminal region. Contains one covalently linked retinal chromophore.

The protein localises to the membrane. The protein resides in the cell projection. It localises to the cilium. It is found in the photoreceptor outer segment. Its function is as follows. Photoreceptor required for image-forming vision at low light intensity. While most salt water fish species use retinal as chromophore, most freshwater fish use 3-dehydroretinal, or a mixture of retinal and 3-dehydroretinal. Light-induced isomerization of 11-cis to all-trans retinal triggers a conformational change that activates signaling via G-proteins. Subsequent receptor phosphorylation mediates displacement of the bound G-protein alpha subunit by arrestin and terminates signaling. The protein is Rhodopsin (rho) of Cottocomephorus grewingkii (Baikal yellowfin).